A 158-amino-acid polypeptide reads, in one-letter code: Transcriptional repressor NrdR (158 aa).

A zinc finger spans residues 3-34 (CPYCGYPDSRVIDSRPTDDNTAIRRRRECLKC). Positions 49-139 (ILVIKKDNRR…VYRQFKDINT (91 aa)) constitute an ATP-cone domain.

The protein belongs to the NrdR family. Zn(2+) is required as a cofactor.

Its function is as follows. Negatively regulates transcription of bacterial ribonucleotide reductase nrd genes and operons by binding to NrdR-boxes. The polypeptide is Transcriptional repressor NrdR (Caldanaerobacter subterraneus subsp. tengcongensis (strain DSM 15242 / JCM 11007 / NBRC 100824 / MB4) (Thermoanaerobacter tengcongensis)).